The chain runs to 316 residues: 4-diphosphocytidyl-2-C-methyl-D-erythritol kinase (316 aa).

The active site involves Lys-23. 108-118 (PVAGGMAGGSA) lines the ATP pocket. The active site involves Asp-150.

It belongs to the GHMP kinase family. IspE subfamily.

The catalysed reaction is 4-CDP-2-C-methyl-D-erythritol + ATP = 4-CDP-2-C-methyl-D-erythritol 2-phosphate + ADP + H(+). Its pathway is isoprenoid biosynthesis; isopentenyl diphosphate biosynthesis via DXP pathway; isopentenyl diphosphate from 1-deoxy-D-xylulose 5-phosphate: step 3/6. Functionally, catalyzes the phosphorylation of the position 2 hydroxy group of 4-diphosphocytidyl-2C-methyl-D-erythritol. The polypeptide is 4-diphosphocytidyl-2-C-methyl-D-erythritol kinase (Mycolicibacterium paratuberculosis (strain ATCC BAA-968 / K-10) (Mycobacterium paratuberculosis)).